Here is a 445-residue protein sequence, read N- to C-terminus: Neuropeptide Y receptor type 5 (445 aa).

At 1–42 (MDLELDEYYNKTLATENNTAATRNSDFPVWDDYKSSVDDLQY) the chain is on the extracellular side. 2 N-linked (GlcNAc...) asparagine glycosylation sites follow: N10 and N17. The chain crosses the membrane as a helical span at residues 43–63 (FLIGLYTFVSLLGFMGNLLIL). Topologically, residues 64–77 (MALMKKRNQKTTVN) are cytoplasmic. A helical membrane pass occupies residues 78–98 (FLIGNLAFSDILVVLFCSPFT). The Extracellular segment spans residues 99 to 117 (LTSVLLDQWMFGKVMCHIM). C114 and C198 are disulfide-bonded. A helical membrane pass occupies residues 118-138 (PFLQCVSVLVSTLILISIAIV). The Cytoplasmic portion of the chain corresponds to 139–156 (RYHMIKHPISNNLTANHG). A helical membrane pass occupies residues 157-177 (YFLIATVWTLGFAICSPLPVF). Over 178-208 (HSLVELQETFGSALLSSRYLCVESWPSDSYR) the chain is Extracellular. Residues 209-229 (IAFTISLLLVQYILPLVCLTV) form a helical membrane-spanning segment. The Cytoplasmic portion of the chain corresponds to 230-369 (SHTSVCRSIS…KKRSRSVFYR (140 aa)). The helical transmembrane segment at 370–390 (LTILILVFAVSWMPLHLFHVV) threads the bilayer. Residues 391 to 407 (TDFNDNLISNRHFKLVY) lie on the Extracellular side of the membrane. The chain crosses the membrane as a helical span at residues 408–428 (CICHLLGMMSCCLNPILYGFL). The Cytoplasmic portion of the chain corresponds to 429–445 (NNGIKADLVSLIHCLHM). Residue C442 is the site of S-palmitoyl cysteine attachment.

This sequence belongs to the G-protein coupled receptor 1 family. In terms of tissue distribution, brain; hypothalamus.

Its subcellular location is the cell membrane. In terms of biological role, receptor for neuropeptide Y and peptide YY. The activity of this receptor is mediated by G proteins that inhibit adenylate cyclase activity. Seems to be associated with food intake. Could be involved in feeding disorders. This is Neuropeptide Y receptor type 5 (NPY5R) from Homo sapiens (Human).